A 167-amino-acid chain; its full sequence is Nascent polypeptide-associated complex subunit beta (167 aa).

2 disordered regions span residues 1 to 48 (MDQA…GADD) and 133 to 167 (QNMQKNQAGAEGKKDDEEDDIPDLVEGQDFESKVE). Residues 25–42 (NRNRGKGTPRRKVKKVHK) show a composition bias toward basic residues. The NAC-A/B domain occupies 45–110 (GADDKKLQAT…GEEKELTELV (66 aa)). A compositionally biased stretch (acidic residues) spans 148–161 (DEEDDIPDLVEGQD).

Belongs to the NAC-beta family. As to quaternary structure, part of the nascent polypeptide-associated complex (NAC), consisting of egd2 and egd1. NAC associates with ribosomes via egd1.

The protein localises to the cytoplasm. It is found in the nucleus. Functionally, component of the nascent polypeptide-associated complex (NAC), a dynamic component of the ribosomal exit tunnel, protecting the emerging polypeptides from interaction with other cytoplasmic proteins to ensure appropriate nascent protein targeting. The NAC complex also promotes mitochondrial protein import by enhancing productive ribosome interactions with the outer mitochondrial membrane and blocks the inappropriate interaction of ribosomes translating non-secretory nascent polypeptides with translocation sites in the membrane of the endoplasmic reticulum. EGD1 may act as a transcription factor that exert a negative effect on the expression of several genes that are transcribed by RNA polymerase II. The polypeptide is Nascent polypeptide-associated complex subunit beta (egd1) (Aspergillus terreus (strain NIH 2624 / FGSC A1156)).